Consider the following 633-residue polypeptide: DNA topoisomerase 1 (633 aa).

A Toprim domain is found at Lys-6 to Thr-115. Mg(2+)-binding residues include Glu-12 and Asp-84. A Topo IA-type catalytic domain is found at Asp-130–Phe-543. Positions Ser-164–Gln-169 are interaction with DNA. The O-(5'-phospho-DNA)-tyrosine intermediate role is filled by Tyr-288. Disulfide bonds link Cys-559–Cys-578 and Cys-561–Cys-580. The C4-type zinc finger occupies Cys-559–Cys-580. The segment at Leu-601–Ser-633 is disordered.

This sequence belongs to the type IA topoisomerase family. As to quaternary structure, monomer. It depends on Mg(2+) as a cofactor.

The catalysed reaction is ATP-independent breakage of single-stranded DNA, followed by passage and rejoining.. Functionally, releases the supercoiling and torsional tension of DNA, which is introduced during the DNA replication and transcription, by transiently cleaving and rejoining one strand of the DNA duplex. Introduces a single-strand break via transesterification at a target site in duplex DNA. The scissile phosphodiester is attacked by the catalytic tyrosine of the enzyme, resulting in the formation of a DNA-(5'-phosphotyrosyl)-enzyme intermediate and the expulsion of a 3'-OH DNA strand. The free DNA strand then undergoes passage around the unbroken strand, thus removing DNA supercoils. Finally, in the religation step, the DNA 3'-OH attacks the covalent intermediate to expel the active-site tyrosine and restore the DNA phosphodiester backbone. This is DNA topoisomerase 1 from Thermotoga maritima (strain ATCC 43589 / DSM 3109 / JCM 10099 / NBRC 100826 / MSB8).